We begin with the raw amino-acid sequence, 301 residues long: N-acetylmuramic acid 6-phosphate etherase (301 aa).

The region spanning 59-222 (TSEALMHGGR…STSVMVKLGK (164 aa)) is the SIS domain. Catalysis depends on glutamate 87, which acts as the Proton donor. Residue glutamate 118 is part of the active site.

The protein belongs to the GCKR-like family. MurNAc-6-P etherase subfamily. Homodimer.

The enzyme catalyses N-acetyl-D-muramate 6-phosphate + H2O = N-acetyl-D-glucosamine 6-phosphate + (R)-lactate. Its pathway is amino-sugar metabolism; N-acetylmuramate degradation. Specifically catalyzes the cleavage of the D-lactyl ether substituent of MurNAc 6-phosphate, producing GlcNAc 6-phosphate and D-lactate. The protein is N-acetylmuramic acid 6-phosphate etherase of Picosynechococcus sp. (strain ATCC 27264 / PCC 7002 / PR-6) (Agmenellum quadruplicatum).